The following is an 85-amino-acid chain: MFQQEVTITAPNGLHTRPAAQFVKEAKGFTSEITVTSNGKSASAKSLFKLQTLGLTQGTVVTISAEGEDEQKAVEHLVKLMAELE.

In terms of domain architecture, HPr spans 1 to 85; sequence MFQQEVTITA…HLVKLMAELE (85 aa). H15 serves as the catalytic Pros-phosphohistidine intermediate.

Belongs to the HPr family.

The protein localises to the cytoplasm. In terms of biological role, general (non sugar-specific) component of the phosphoenolpyruvate-dependent sugar phosphotransferase system (sugar PTS). This major carbohydrate active-transport system catalyzes the phosphorylation of incoming sugar substrates concomitantly with their translocation across the cell membrane. The phosphoryl group from phosphoenolpyruvate (PEP) is transferred to the phosphoryl carrier protein HPr by enzyme I. Phospho-HPr then transfers it to the PTS EIIA domain. The sequence is that of Phosphocarrier protein HPr (ptsH) from Escherichia coli O157:H7.